Consider the following 259-residue polypeptide: UPF0246 protein PLES_14941 (259 aa).

The protein belongs to the UPF0246 family.

The polypeptide is UPF0246 protein PLES_14941 (Pseudomonas aeruginosa (strain LESB58)).